A 98-amino-acid chain; its full sequence is Co-chaperonin GroES (98 aa).

The segment at 32–56 is disordered; the sequence is NAKEKPQQGEVLAVGPGRRDDEGKR.

It belongs to the GroES chaperonin family. As to quaternary structure, heptamer of 7 subunits arranged in a ring. Interacts with the chaperonin GroEL.

It is found in the cytoplasm. In terms of biological role, together with the chaperonin GroEL, plays an essential role in assisting protein folding. The GroEL-GroES system forms a nano-cage that allows encapsulation of the non-native substrate proteins and provides a physical environment optimized to promote and accelerate protein folding. GroES binds to the apical surface of the GroEL ring, thereby capping the opening of the GroEL channel. The polypeptide is Co-chaperonin GroES (Bifidobacterium animalis subsp. lactis (strain AD011)).